Here is a 106-residue protein sequence, read N- to C-terminus: Large ribosomal subunit protein uL23 (106 aa).

Belongs to the universal ribosomal protein uL23 family. As to quaternary structure, part of the 50S ribosomal subunit. Contacts protein L29, and trigger factor when it is bound to the ribosome.

Functionally, one of the early assembly proteins it binds 23S rRNA. One of the proteins that surrounds the polypeptide exit tunnel on the outside of the ribosome. Forms the main docking site for trigger factor binding to the ribosome. The sequence is that of Large ribosomal subunit protein uL23 from Neisseria gonorrhoeae (strain ATCC 700825 / FA 1090).